A 386-amino-acid polypeptide reads, in one-letter code: Cytochrome b (386 aa).

The next 4 membrane-spanning stretches (helical) occupy residues F32–M52, W76–G98, P113–V133, and F179–L199. Heme b-binding residues include H82 and H96. Positions 183 and 197 each coordinate heme b. H202 contributes to the a ubiquinone binding site. 4 helical membrane-spanning segments follow: residues Y225–F245, L289–D309, L321–S341, and F348–P368.

The protein belongs to the cytochrome b family. As to quaternary structure, fungal cytochrome b-c1 complex contains 10 subunits; 3 respiratory subunits, 2 core proteins and 5 low-molecular weight proteins. Cytochrome b-c1 complex is a homodimer. Requires heme b as cofactor.

It localises to the mitochondrion inner membrane. Functionally, component of the ubiquinol-cytochrome c reductase complex (complex III or cytochrome b-c1 complex) that is part of the mitochondrial respiratory chain. The b-c1 complex mediates electron transfer from ubiquinol to cytochrome c. Contributes to the generation of a proton gradient across the mitochondrial membrane that is then used for ATP synthesis. This is Cytochrome b (cob) from Rhizopus oryzae (Mucormycosis agent).